Here is a 403-residue protein sequence, read N- to C-terminus: Aspartic protease PEP1 (403 aa).

The signal sequence occupies residues methionine 1–alanine 20. Positions alanine 21 to alanine 67 are cleaved as a propeptide — activation peptide. Positions tyrosine 82–alanine 400 constitute a Peptidase A1 domain. Residue aspartate 98 is part of the active site. N-linked (GlcNAc...) asparagine glycosylation is found at asparagine 159 and asparagine 270. Aspartate 293 is an active-site residue. An intrachain disulfide couples cysteine 329 to cysteine 361.

The protein belongs to the peptidase A1 family.

The protein localises to the secreted. It catalyses the reaction Hydrolysis of proteins with broad specificity. Generally favors hydrophobic residues in P1 and P1', but also accepts Lys in P1, which leads to activation of trypsinogen. Does not clot milk.. Functionally, secreted aspartic endopeptidase that allows assimilation of proteinaceous substrates. Can catalyze hydrolysis of the major structural proteins of basement membrane, elastin, collagen, and laminin. Thought to play a significant role in virulence. The polypeptide is Aspartic protease PEP1 (PEP1) (Arthroderma benhamiae (strain ATCC MYA-4681 / CBS 112371) (Trichophyton mentagrophytes)).